Consider the following 142-residue polypeptide: Hemoglobin subunit alpha-A (142 aa).

The Globin domain occupies 2 to 142 (VLSAADKNNV…VGTVLTAKYR (141 aa)). Histidine 59 serves as a coordination point for O2. Histidine 88 contacts heme b.

The protein belongs to the globin family. As to quaternary structure, heterotetramer of two alpha chains and two beta chains. Red blood cells.

Functionally, involved in oxygen transport from the lung to the various peripheral tissues. The protein is Hemoglobin subunit alpha-A (HBAA) of Meleagris gallopavo (Wild turkey).